The following is a 114-amino-acid chain: Photosystem II reaction center Psb28 protein (114 aa).

Belongs to the Psb28 family. As to quaternary structure, part of the photosystem II complex.

The protein localises to the plastid. It is found in the chloroplast thylakoid membrane. The polypeptide is Photosystem II reaction center Psb28 protein (Gracilaria tenuistipitata var. liui (Red alga)).